The primary structure comprises 388 residues: Probable acetyl-CoA acetyltransferase (388 aa).

The active-site Acyl-thioester intermediate is the cysteine 84. Lysine 187 participates in a covalent cross-link: Isoglutamyl lysine isopeptide (Lys-Gln) (interchain with Q-Cter in protein Pup). Residues histidine 345 and cysteine 375 each act as proton acceptor in the active site.

Belongs to the thiolase-like superfamily. Thiolase family.

It catalyses the reaction 2 acetyl-CoA = acetoacetyl-CoA + CoA. The protein is Probable acetyl-CoA acetyltransferase of Mycolicibacterium smegmatis (strain ATCC 700084 / mc(2)155) (Mycobacterium smegmatis).